Consider the following 309-residue polypeptide: Taste receptor type 2 member 46 (309 aa).

Position 1 (methionine 1) is a topological domain, extracellular. Residues 2–22 (ITFLPIIFSILIVVTFVIGNF) traverse the membrane as a helical segment. At 23 to 46 (ANGFIALANSIEWFKRQKISFADQ) the chain is on the cytoplasmic side. Residues 47–67 (ILTALAVSRVGLLWVLLLNWY) traverse the membrane as a helical segment. Over 68 to 86 (ATELNPAFYSIEVRITAYN) the chain is Extracellular. A helical membrane pass occupies residues 87–107 (LWAVINHFSNWLATSLSIFYL). At 108-126 (LKIANFSNLIFLRLKRRVK) the chain is on the cytoplasmic side. A helical transmembrane segment spans residues 127–147 (SVVLVILLGPLLFLVCHLFVI). Topologically, residues 148 to 178 (NMNQIIWTKEYEGNMTWKIKLRSAMYLSNIT) are extracellular. Residues asparagine 161 and asparagine 176 are each glycosylated (N-linked (GlcNAc...) asparagine). The helical transmembrane segment at 179–199 (VTILANLVPFTLTLISFLLLI) threads the bilayer. Over 200–229 (CSLCKHLKKMQLHGKGSQDPSMKVHIKALQ) the chain is Cytoplasmic. A helical transmembrane segment spans residues 230–250 (TVTSFLLLCAIYFLSIIMSVW). The Extracellular portion of the chain corresponds to 251–259 (SFESLENKP). A helical membrane pass occupies residues 260–280 (VFMFCEAITFSYPSTHPFILI). Over 281–309 (WGNKKLKQTFLSVLWHVRYWVKGEEPSSP) the chain is Cytoplasmic.

It belongs to the G-protein coupled receptor T2R family.

Its subcellular location is the membrane. The protein resides in the cell projection. It localises to the cilium membrane. In terms of biological role, receptor that may play a role in the perception of bitterness and is gustducin-linked. May play a role in sensing the chemical composition of the gastrointestinal content. The activity of this receptor may stimulate alpha gustducin, mediate PLC-beta-2 activation and lead to the gating of TRPM5. In airway epithelial cells, binding of bitter compounds increases the intracellular calcium ion concentration and stimulates ciliary beat frequency. The chain is Taste receptor type 2 member 46 (TAS2R46) from Pan paniscus (Pygmy chimpanzee).